We begin with the raw amino-acid sequence, 363 residues long: Chorismate synthase (363 aa).

Position 48 (arginine 48) interacts with NADP(+). FMN-binding positions include 125–127 (RSS), 238–239 (NA), glycine 278, 293–297 (KPTAS), and arginine 319.

Belongs to the chorismate synthase family. Homotetramer. FMNH2 is required as a cofactor.

The enzyme catalyses 5-O-(1-carboxyvinyl)-3-phosphoshikimate = chorismate + phosphate. The protein operates within metabolic intermediate biosynthesis; chorismate biosynthesis; chorismate from D-erythrose 4-phosphate and phosphoenolpyruvate: step 7/7. Its function is as follows. Catalyzes the anti-1,4-elimination of the C-3 phosphate and the C-6 proR hydrogen from 5-enolpyruvylshikimate-3-phosphate (EPSP) to yield chorismate, which is the branch point compound that serves as the starting substrate for the three terminal pathways of aromatic amino acid biosynthesis. This reaction introduces a second double bond into the aromatic ring system. The chain is Chorismate synthase from Acinetobacter baumannii (strain ACICU).